Consider the following 168-residue polypeptide: 2-C-methyl-D-erythritol 2,4-cyclodiphosphate synthase (168 aa).

D11 and H13 together coordinate a divalent metal cation. Residues 11-13 and 41-42 contribute to the 4-CDP-2-C-methyl-D-erythritol 2-phosphate site; these read DVH and HS. H49 lines the a divalent metal cation pocket. 4-CDP-2-C-methyl-D-erythritol 2-phosphate is bound by residues 63 to 65, 68 to 72, 139 to 142, F146, and R149; these read DIG, FPDTD, and TTTE.

The protein belongs to the IspF family. In terms of assembly, homotrimer. A divalent metal cation serves as cofactor.

It carries out the reaction 4-CDP-2-C-methyl-D-erythritol 2-phosphate = 2-C-methyl-D-erythritol 2,4-cyclic diphosphate + CMP. It functions in the pathway isoprenoid biosynthesis; isopentenyl diphosphate biosynthesis via DXP pathway; isopentenyl diphosphate from 1-deoxy-D-xylulose 5-phosphate: step 4/6. Involved in the biosynthesis of isopentenyl diphosphate (IPP) and dimethylallyl diphosphate (DMAPP), two major building blocks of isoprenoid compounds. Catalyzes the conversion of 4-diphosphocytidyl-2-C-methyl-D-erythritol 2-phosphate (CDP-ME2P) to 2-C-methyl-D-erythritol 2,4-cyclodiphosphate (ME-CPP) with a corresponding release of cytidine 5-monophosphate (CMP). The polypeptide is 2-C-methyl-D-erythritol 2,4-cyclodiphosphate synthase (Psychrobacter cryohalolentis (strain ATCC BAA-1226 / DSM 17306 / VKM B-2378 / K5)).